Reading from the N-terminus, the 1004-residue chain is NADH:acrylate oxidoreductase (1004 aa).

Threonine 455 carries the post-translational modification FMN phosphoryl threonine. FAD-binding residues include alanine 508, glutamate 527, asparagine 535, threonine 536, glycine 540, glycine 541, and aspartate 775. Arginine 834 serves as the catalytic Proton donor. 4 residues coordinate FAD: histidine 941, glutamate 970, alanine 985, and leucine 986.

Belongs to the FAD-dependent oxidoreductase 2 family. FRD/SDH subfamily. FAD serves as cofactor. FMN is required as a cofactor. Is flavinylated on Thr-455 by ApbE, encoded in a neighboring gene. Flavinylation is essential for catalytic activity.

It carries out the reaction acrylate + NADH + H(+) = propanoate + NAD(+). Functionally, catalyzes the NADH-dependent reduction of acrylate to propanoate. The principal role of ARD in Vibrio seems to be the energy-saving detoxification of acrylate coming from the environment. May also use acrylate as the terminal electron acceptor for NADH regeneration at oxygen deficiency. NADPH cannot replace NADH as the electron donor. Is also able to reduce methacrylate in vitro, but with a much lower efficiency. In Vibrio harveyi (Beneckea harveyi), this protein is NADH:acrylate oxidoreductase.